The sequence spans 226 residues: Cytochrome c oxidase subunit 2 (226 aa).

The Mitochondrial intermembrane portion of the chain corresponds to 1–25; the sequence is MNTWLLSLQNSNSPTYDMMIFFHDF. The helical transmembrane segment at 26 to 47 threads the bilayer; that stretch reads TMMILIFITLLILFIMFTMINN. The Mitochondrial matrix segment spans residues 48 to 61; sequence NLINRFLLQGHFIE. Residues 62 to 81 traverse the membrane as a helical segment; sequence LIWTITPMIILILIAIPSFK. The Mitochondrial intermembrane portion of the chain corresponds to 82 to 226; it reads ILYLTDEMFN…YFKNWLKSFL (145 aa). Residues His160, Cys195, Glu197, Cys199, His203, and Met206 each coordinate Cu cation. Glu197 is a Mg(2+) binding site.

The protein belongs to the cytochrome c oxidase subunit 2 family. Component of the cytochrome c oxidase (complex IV, CIV), a multisubunit enzyme composed of a catalytic core of 3 subunits and several supernumerary subunits. The complex exists as a monomer or a dimer and forms supercomplexes (SCs) in the inner mitochondrial membrane with ubiquinol-cytochrome c oxidoreductase (cytochrome b-c1 complex, complex III, CIII). It depends on Cu cation as a cofactor.

It is found in the mitochondrion inner membrane. The enzyme catalyses 4 Fe(II)-[cytochrome c] + O2 + 8 H(+)(in) = 4 Fe(III)-[cytochrome c] + 2 H2O + 4 H(+)(out). Component of the cytochrome c oxidase, the last enzyme in the mitochondrial electron transport chain which drives oxidative phosphorylation. The respiratory chain contains 3 multisubunit complexes succinate dehydrogenase (complex II, CII), ubiquinol-cytochrome c oxidoreductase (cytochrome b-c1 complex, complex III, CIII) and cytochrome c oxidase (complex IV, CIV), that cooperate to transfer electrons derived from NADH and succinate to molecular oxygen, creating an electrochemical gradient over the inner membrane that drives transmembrane transport and the ATP synthase. Cytochrome c oxidase is the component of the respiratory chain that catalyzes the reduction of oxygen to water. Electrons originating from reduced cytochrome c in the intermembrane space (IMS) are transferred via the dinuclear copper A center (CU(A)) of subunit 2 and heme A of subunit 1 to the active site in subunit 1, a binuclear center (BNC) formed by heme A3 and copper B (CU(B)). The BNC reduces molecular oxygen to 2 water molecules using 4 electrons from cytochrome c in the IMS and 4 protons from the mitochondrial matrix. The chain is Cytochrome c oxidase subunit 2 (COII) from Lasius sp.